The sequence spans 645 residues: ATP-dependent zinc metalloprotease FtsH (645 aa).

Residues 1–8 are Cytoplasmic-facing; sequence MDFNREHK. A helical membrane pass occupies residues 9-29; the sequence is INFLYVLAAMVGVLLIQSLVS. The Periplasmic portion of the chain corresponds to 30 to 105; sequence QPDHIRTIPY…FSGEPEPGPW (76 aa). The helical transmembrane segment at 106–126 threads the bilayer; sequence PTILGWLMPIVGFALVWMFLI. At 127–645 the chain is on the cytoplasmic side; it reads RPMSMGPGMD…ALTVEGGEAQ (519 aa). 199–206 contributes to the ATP binding site; that stretch reads GPPGTGKT. Histidine 423 lines the Zn(2+) pocket. Glutamate 424 is an active-site residue. Histidine 427 and aspartate 500 together coordinate Zn(2+). The segment at 612–645 is disordered; sequence SASVLRDGGDGAADAGQDRSGEHRALTVEGGEAQ. The span at 627–637 shows a compositional bias: basic and acidic residues; sequence GQDRSGEHRAL.

It in the central section; belongs to the AAA ATPase family. The protein in the C-terminal section; belongs to the peptidase M41 family. As to quaternary structure, homohexamer. The cofactor is Zn(2+).

The protein localises to the cell inner membrane. Its function is as follows. Acts as a processive, ATP-dependent zinc metallopeptidase for both cytoplasmic and membrane proteins. Plays a role in the quality control of integral membrane proteins. The chain is ATP-dependent zinc metalloprotease FtsH from Paraburkholderia phymatum (strain DSM 17167 / CIP 108236 / LMG 21445 / STM815) (Burkholderia phymatum).